Reading from the N-terminus, the 211-residue chain is Small ribosomal subunit protein uS4 (211 aa).

The 62-residue stretch at 99-160 (RRLDSVVYQM…KSRNIQQVRE (62 aa)) folds into the S4 RNA-binding domain.

The protein belongs to the universal ribosomal protein uS4 family. Part of the 30S ribosomal subunit. Contacts protein S5. The interaction surface between S4 and S5 is involved in control of translational fidelity.

In terms of biological role, one of the primary rRNA binding proteins, it binds directly to 16S rRNA where it nucleates assembly of the body of the 30S subunit. Functionally, with S5 and S12 plays an important role in translational accuracy. The polypeptide is Small ribosomal subunit protein uS4 (Petrotoga mobilis (strain DSM 10674 / SJ95)).